The sequence spans 467 residues: Ribosomal protein uS12 methylthiotransferase RimO (467 aa).

The tract at residues 1-27 (MTSNPPDLRPDLAPKPTFGTAPRPDQP) is disordered. The MTTase N-terminal domain maps to 27 to 137 (PTLGMVSLGC…VLDAVHAAVP (111 aa)). [4Fe-4S] cluster-binding residues include Cys-36, Cys-72, Cys-101, Cys-168, Cys-172, and Cys-175. Residues 154 to 397 (LTPRHFSYLK…MEKAQAISEA (244 aa)) form the Radical SAM core domain. In terms of domain architecture, TRAM spans 400–467 (ASKVGQTLQV…GEYDLWGALR (68 aa)).

Belongs to the methylthiotransferase family. RimO subfamily. Requires [4Fe-4S] cluster as cofactor.

It is found in the cytoplasm. The enzyme catalyses L-aspartate(89)-[ribosomal protein uS12]-hydrogen + (sulfur carrier)-SH + AH2 + 2 S-adenosyl-L-methionine = 3-methylsulfanyl-L-aspartate(89)-[ribosomal protein uS12]-hydrogen + (sulfur carrier)-H + 5'-deoxyadenosine + L-methionine + A + S-adenosyl-L-homocysteine + 2 H(+). Catalyzes the methylthiolation of an aspartic acid residue of ribosomal protein uS12. This Ruegeria sp. (strain TM1040) (Silicibacter sp.) protein is Ribosomal protein uS12 methylthiotransferase RimO.